The following is an 84-amino-acid chain: Cell division topological specificity factor (84 aa).

This sequence belongs to the MinE family.

Prevents the cell division inhibition by proteins MinC and MinD at internal division sites while permitting inhibition at polar sites. This ensures cell division at the proper site by restricting the formation of a division septum at the midpoint of the long axis of the cell. The polypeptide is Cell division topological specificity factor (Cupriavidus metallidurans (strain ATCC 43123 / DSM 2839 / NBRC 102507 / CH34) (Ralstonia metallidurans)).